Here is a 193-residue protein sequence, read N- to C-terminus: NADH-quinone oxidoreductase subunit B (193 aa).

4 residues coordinate [4Fe-4S] cluster: Cys-72, Cys-73, Cys-137, and Cys-167.

It belongs to the complex I 20 kDa subunit family. NDH-1 is composed of 14 different subunits. Subunits NuoB, C, D, E, F, and G constitute the peripheral sector of the complex. Requires [4Fe-4S] cluster as cofactor.

It localises to the cell inner membrane. It catalyses the reaction a quinone + NADH + 5 H(+)(in) = a quinol + NAD(+) + 4 H(+)(out). NDH-1 shuttles electrons from NADH, via FMN and iron-sulfur (Fe-S) centers, to quinones in the respiratory chain. The immediate electron acceptor for the enzyme in this species is believed to be ubiquinone. Couples the redox reaction to proton translocation (for every two electrons transferred, four hydrogen ions are translocated across the cytoplasmic membrane), and thus conserves the redox energy in a proton gradient. The sequence is that of NADH-quinone oxidoreductase subunit B from Bradyrhizobium sp. (strain ORS 278).